Reading from the N-terminus, the 323-residue chain is Beta-ketoacyl-[acyl-carrier-protein] synthase III (323 aa).

Active-site residues include Cys114 and His250. An ACP-binding region spans residues 251-255 (QANIR). Asn280 is an active-site residue.

It belongs to the thiolase-like superfamily. FabH family. Homodimer.

It is found in the cytoplasm. The catalysed reaction is malonyl-[ACP] + acetyl-CoA + H(+) = 3-oxobutanoyl-[ACP] + CO2 + CoA. It functions in the pathway lipid metabolism; fatty acid biosynthesis. In terms of biological role, catalyzes the condensation reaction of fatty acid synthesis by the addition to an acyl acceptor of two carbons from malonyl-ACP. Catalyzes the first condensation reaction which initiates fatty acid synthesis and may therefore play a role in governing the total rate of fatty acid production. Possesses both acetoacetyl-ACP synthase and acetyl transacylase activities. Its substrate specificity determines the biosynthesis of branched-chain and/or straight-chain of fatty acids. The protein is Beta-ketoacyl-[acyl-carrier-protein] synthase III of Ruegeria sp. (strain TM1040) (Silicibacter sp.).